A 241-amino-acid chain; its full sequence is Agamous-like MADS-box protein AGL9 homolog (241 aa).

The region spanning 3 to 57 is the MADS-box domain; sequence RGRVELKRIENKINRQVTFAKRRNGLLKKAYELSVLCDAEVALIIFSNRGKLYEF. Residues 89–179 form the K-box domain; it reads EISSQQEYLK…KQRLMEGSTL (91 aa).

It is found in the nucleus. Functionally, probable transcription factor. This Petunia hybrida (Petunia) protein is Agamous-like MADS-box protein AGL9 homolog (FBP2).